The primary structure comprises 805 residues: Cell division cycle 5-related protein (805 aa).

HTH myb-type domains follow at residues 1–58 (MPRI…DPSI) and 59–108 (KKTE…DQAQ). 2 DNA-binding regions (H-T-H motif) span residues 31-54 (WSRIASLLHRKSAKQCKARWYEWL) and 82-104 (WRTIAPLIGRTAAQCLERYEYLL). Residues 108 to 127 (QAKEGDKDEGDDPRKLRPGE) show a composition bias toward basic and acidic residues. Disordered regions lie at residues 108 to 143 (QAKEGDKDEGDDPRKLRPGEIDPNPETKPARPDPID), 246 to 293 (HLEG…HVKK), 409 to 442 (LSTPYRTPGEGSGSTPRQGMTPRGAIGTPSQRSV), and 530 to 556 (LERRRRSQAVQRELPRPSNVNTSVLRP). Residues 142 to 193 (IDMDEDELEMLSEARARLANTQGKKAKRKAREKQLEEARRLAALQKRRELRA) are a coiled coil. Positions 246-274 (HLEGKMRDEIEQQERKKDKERMKKKKESD) are enriched in basic and acidic residues. 2 coiled-coil regions span residues 511–542 (EDAADIDERALALRAKQEELERRRRSQAVQRE) and 678–804 (YTRA…SKLQ).

The protein belongs to the CEF1 family. As to quaternary structure, component of the precatalytic, catalytic and postcatalytic spliceosome complexes.

It is found in the nucleus. The protein localises to the cytoplasm. Its function is as follows. DNA-binding protein involved in cell cycle control. May act as a transcription activator. Plays a role in pre-mRNA splicing as core component of precatalytic, catalytic and postcatalytic spliceosomal complexes. May also play a role in the response to DNA damage (DDR). The sequence is that of Cell division cycle 5-related protein (cdc5l) from Nematostella vectensis (Starlet sea anemone).